The sequence spans 519 residues: Probable DNA ligase (519 aa).

Glu211 is a binding site for ATP. The N6-AMP-lysine intermediate role is filled by Lys213. ATP-binding residues include Arg218, Arg233, Glu262, Phe302, Arg374, and Lys380.

The protein belongs to the ATP-dependent DNA ligase family. Requires Mg(2+) as cofactor.

The catalysed reaction is ATP + (deoxyribonucleotide)n-3'-hydroxyl + 5'-phospho-(deoxyribonucleotide)m = (deoxyribonucleotide)n+m + AMP + diphosphate.. Its function is as follows. DNA ligase that seals nicks in double-stranded DNA during DNA replication, DNA recombination and DNA repair. The chain is Probable DNA ligase from Anaeromyxobacter sp. (strain Fw109-5).